We begin with the raw amino-acid sequence, 39 residues long: Putative beta-neurotoxin (39 aa).

A disordered region spans residues 1 to 39 (GGKEGYPLNSSNGCKSGRFAGTNSNENTECKGXDAENGY). Residues 3 to 39 (KEGYPLNSSNGCKSGRFAGTNSNENTECKGXDAENGY) enclose the LCN-type CS-alpha/beta domain. Basic and acidic residues predominate over residues 28–39 (TECKGXDAENGY).

It belongs to the long (4 C-C) scorpion toxin superfamily. Sodium channel inhibitor family. Beta subfamily. In terms of tissue distribution, expressed by the venom gland.

It is found in the secreted. Functionally, beta toxins bind voltage-independently at site-4 of sodium channels (Nav) and shift the voltage of activation toward more negative potentials thereby affecting sodium channel activation and promoting spontaneous and repetitive firing. This chain is Putative beta-neurotoxin, found in Tityus pachyurus (Colombian scorpion).